The sequence spans 485 residues: Zinc finger protein 577 (485 aa).

Residues 1–21 are disordered; that stretch reads MKNATIVMSVRREQGSSSGEG. Positions 23–94 constitute a KRAB domain; it reads LSFEDVAVGF…EGAAHSQICP (72 aa). The C2H2-type 1; degenerate zinc finger occupies 158 to 180; sequence HECSVCGRAFSRKAQLIQHQRTE. 7 consecutive C2H2-type zinc fingers follow at residues 186 to 208, 214 to 236, 242 to 264, 270 to 292, 298 to 320, 326 to 348, and 354 to 376; these read HGCGECGKTFMRKIQLTEHQRTH, HECSECGKAFSRKSQLMVHQRTH, YRCSKCGKAFSRKCRLNRHQRSH, YGCSVCGKAFSQKAYLTAHQRLH, YKCSDCGRTFYFKSDLTRHQRIH, YECSECEKAFRSKSKLIQHQRTH, and YSCRECGKAFAHMSVLIKHEKTH.

Belongs to the krueppel C2H2-type zinc-finger protein family.

It localises to the nucleus. In terms of biological role, may be involved in transcriptional regulation. The polypeptide is Zinc finger protein 577 (ZNF577) (Homo sapiens (Human)).